A 369-amino-acid chain; its full sequence is Septin-5 (369 aa).

Threonine 13 is subject to Phosphothreonine. The 274-residue stretch at 41-314 folds into the Septin-type G domain; sequence KGFDFTLMVA…ENYRAHCIQQ (274 aa). The interval 51–58 is G1 motif; the sequence is GESGLGKS. GTP-binding positions include 51 to 58, threonine 85, and glycine 111; that span reads GESGLGKS. The segment at 108 to 111 is G3 motif; it reads DTPG. Arginine 168 is subject to Omega-N-methylarginine. The G4 motif stretch occupies residues 189–192; the sequence is AKAD. Position 190–198 (190–198) interacts with GTP; it reads KADCLVPSE. Serine 225 bears the Phosphoserine mark. GTP contacts are provided by glycine 248 and arginine 263. Residue serine 327 is modified to Phosphoserine. Threonine 336 carries the phosphothreonine modification. A coiled-coil region spans residues 338-369; that stretch reads DAETEKLIRMKDEELRRMQEMLQKMKQQMQDQ.

Belongs to the TRAFAC class TrmE-Era-EngA-EngB-Septin-like GTPase superfamily. Septin GTPase family. Septins polymerize into heterooligomeric protein complexes that form filaments, and can associate with cellular membranes, actin filaments and microtubules. GTPase activity is required for filament formation. Interacts with SEPTIN2 and SEPTIN5. Interaction with SEPTIN4 not detected. In platelets, associated with a complex containing STX4. Interacts with PRKN; this interaction leads to SEPTIN5 ubiquitination and degradation. Interacts with DYRK1A. Interacts with STX1A; in the cerebellar cortex. Phosphorylated by DYRK1A.

It is found in the cytoplasm. Its subcellular location is the cytoskeleton. Its function is as follows. Filament-forming cytoskeletal GTPase. Involved in cytokinesis (Potential). May play a role in platelet secretion. This is Septin-5 from Mus musculus (Mouse).